The sequence spans 590 residues: Aspartate--tRNA(Asp/Asn) ligase (590 aa).

Glu170 is a binding site for L-aspartate. The tract at residues 194–197 (QLFK) is aspartate. Arg216 serves as a coordination point for L-aspartate. ATP contacts are provided by residues 216–218 (RDE) and Gln225. His448 is a binding site for L-aspartate. An ATP-binding site is contributed by Glu482. Arg489 contributes to the L-aspartate binding site. 534 to 537 (GWDR) contributes to the ATP binding site. The interval 559-590 (GGVDPLTEAPAPITAQQRKESGIDAKPGKDGA) is disordered. A compositionally biased stretch (basic and acidic residues) spans 575–590 (QRKESGIDAKPGKDGA).

Belongs to the class-II aminoacyl-tRNA synthetase family. Type 1 subfamily. In terms of assembly, homodimer.

The protein resides in the cytoplasm. It carries out the reaction tRNA(Asx) + L-aspartate + ATP = L-aspartyl-tRNA(Asx) + AMP + diphosphate. Functionally, aspartyl-tRNA synthetase with relaxed tRNA specificity since it is able to aspartylate not only its cognate tRNA(Asp) but also tRNA(Asn). Reaction proceeds in two steps: L-aspartate is first activated by ATP to form Asp-AMP and then transferred to the acceptor end of tRNA(Asp/Asn). The polypeptide is Aspartate--tRNA(Asp/Asn) ligase (Mycolicibacterium gilvum (strain PYR-GCK) (Mycobacterium gilvum (strain PYR-GCK))).